We begin with the raw amino-acid sequence, 422 residues long: O-mycaminosyltylonolide 6-deoxyallosyltransferase (422 aa).

The protein belongs to the glycosyltransferase 28 family.

It catalyses the reaction 5-O-beta-D-mycaminosyltylonolide + dTDP-6-deoxy-alpha-D-allose = demethyllactenocin + dTDP + H(+). Its function is as follows. Involved in the biosynthesis of the macrolide antibiotic tylosin derived from the polyketide lactone tylactone. Catalyzes the transfer of 6-deoxy-alpha-D-allose from dTDP-6-deoxy-alpha-D-allose to O-mycaminosyltylonolide (OMT) to yield demethyllactenocin. This is O-mycaminosyltylonolide 6-deoxyallosyltransferase from Streptomyces fradiae (Streptomyces roseoflavus).